A 341-amino-acid chain; its full sequence is MSSSRFDSNKQLTTSSLVIGYALCSSLLAVINKLAITYFNYPGLLTALQYLTCTVAVYLLGKSGLINHDPFTWDTAKKFLPAAIVFYLAIFTNTNLLRHANVDTFIVFRSLTPLLVAIADTVFRSQPLPSRLTFLSLVVILAGAVGYVATDSSFTLTAYSWALAYLVTITTEMVYIKHMVSNIKLNIWGLVLYNNLLSLMIAPVFWFLTGEFTEVFAALSENRGNLFEPYAFSSVAASCVFGFLISYFGFAARNAISATAFTVTGVVNKFLTVVINVLIWDKHATPVGLVCLLFTICGGVGYQQSVKLDKPIEKVSEKDSEKGEEDEELTQLVPGKLASVV.

Transmembrane regions (helical) follow at residues 17–37, 41–61, 71–91, 103–123, 132–152, 156–176, 187–207, 231–251, 260–280, and 283–303; these read LVIGYALCSSLLAVINKLAIT, YPGLLTALQYLTCTVAVYLLG, FTWDTAKKFLPAAIVFYLAIF, DTFIVFRSLTPLLVAIADTVF, LTFLSLVVILAGAVGYVATDS, LTAYSWALAYLVTITTEMVYI, IWGLVLYNNLLSLMIAPVFWF, AFSSVAASCVFGFLISYFGFA, AFTVTGVVNKFLTVVINVLIW, and HATPVGLVCLLFTICGGVGYQ. The segment at 316–341 is disordered; it reads SEKDSEKGEEDEELTQLVPGKLASVV.

It belongs to the nucleotide-sugar transporter family. GDP-Mannose:GMP antiporter (GMA) (TC 2.A.7.13) subfamily. Ubiquitous.

Its subcellular location is the golgi apparatus membrane. Functionally, acts as the major nucleotide-sugar transporter for the import of GDP-Fucose into the Golgi lumen. Transports GDP-Fucose in a strict counter-exchange mode. Is required for proper plant growth and development. Also acts as a GDP-mannose transporter that may be involved in the import of GDP-mannose from the cytoplasm into the Golgi lumen. This chain is GDP-fucose transporter 1, found in Arabidopsis thaliana (Mouse-ear cress).